The chain runs to 167 residues: UPF0114 protein in repA1-repA2 intergenic region (167 aa).

Helical transmembrane passes span Leu15 to Phe35, Leu53 to Val73, and Ile136 to Ile156.

It belongs to the UPF0114 family.

The protein localises to the cell membrane. This chain is UPF0114 protein in repA1-repA2 intergenic region, found in Buchnera aphidicola subsp. Schizaphis graminum (strain Sg).